The chain runs to 869 residues: Aconitate hydratase A (869 aa).

Residues C411, C477, and C480 each contribute to the [4Fe-4S] cluster site.

It belongs to the aconitase/IPM isomerase family. As to quaternary structure, monomer. It depends on [4Fe-4S] cluster as a cofactor.

The enzyme catalyses citrate = D-threo-isocitrate. The catalysed reaction is (2S,3R)-3-hydroxybutane-1,2,3-tricarboxylate = 2-methyl-cis-aconitate + H2O. The protein operates within carbohydrate metabolism; tricarboxylic acid cycle; isocitrate from oxaloacetate: step 2/2. Its pathway is organic acid metabolism; propanoate degradation. Its function is as follows. Involved in the catabolism of short chain fatty acids (SCFA) via the tricarboxylic acid (TCA)(acetyl degradation route) and the 2-methylcitrate cycle I (propionate degradation route). Catalyzes the reversible isomerization of citrate to isocitrate via cis-aconitate. Could catalyze the hydration of 2-methyl-cis-aconitate to yield (2S,3R)-2-methylisocitrate. The apo form of AcnA functions as a RNA-binding regulatory protein. This Cupriavidus necator (Alcaligenes eutrophus) protein is Aconitate hydratase A.